A 158-amino-acid polypeptide reads, in one-letter code: Transcription elongation factor GreA (158 aa).

It belongs to the GreA/GreB family.

In terms of biological role, necessary for efficient RNA polymerase transcription elongation past template-encoded arresting sites. The arresting sites in DNA have the property of trapping a certain fraction of elongating RNA polymerases that pass through, resulting in locked ternary complexes. Cleavage of the nascent transcript by cleavage factors such as GreA or GreB allows the resumption of elongation from the new 3'terminus. GreA releases sequences of 2 to 3 nucleotides. The polypeptide is Transcription elongation factor GreA (Acinetobacter baumannii (strain SDF)).